We begin with the raw amino-acid sequence, 285 residues long: 3-methyl-2-oxobutanoate hydroxymethyltransferase (285 aa).

Residues 1 to 22 (MSEHNVYGAAQPAQPGQPAQPR) are disordered. Over residues 8–21 (GAAQPAQPGQPAQP) the composition is skewed to low complexity. Mg(2+)-binding residues include Asp66 and Asp105. Residues 66–67 (DS), Asp105, and Lys135 each bind 3-methyl-2-oxobutanoate. Glu137 is a binding site for Mg(2+). The active-site Proton acceptor is the Glu203.

This sequence belongs to the PanB family. In terms of assembly, homodecamer; pentamer of dimers. The cofactor is Mg(2+).

It localises to the cytoplasm. It catalyses the reaction 3-methyl-2-oxobutanoate + (6R)-5,10-methylene-5,6,7,8-tetrahydrofolate + H2O = 2-dehydropantoate + (6S)-5,6,7,8-tetrahydrofolate. Its pathway is cofactor biosynthesis; (R)-pantothenate biosynthesis; (R)-pantoate from 3-methyl-2-oxobutanoate: step 1/2. In terms of biological role, catalyzes the reversible reaction in which hydroxymethyl group from 5,10-methylenetetrahydrofolate is transferred onto alpha-ketoisovalerate to form ketopantoate. The protein is 3-methyl-2-oxobutanoate hydroxymethyltransferase of Mycolicibacterium paratuberculosis (strain ATCC BAA-968 / K-10) (Mycobacterium paratuberculosis).